An 800-amino-acid chain; its full sequence is Phenylalanine--tRNA ligase beta subunit (800 aa).

The region spanning 39–154 (SKDIKNLVVG…TEVEPGTDAL (116 aa)) is the tRNA-binding domain. One can recognise a B5 domain in the interval 408-483 (SFVTPIDITA…RIYGYDEIPS (76 aa)). The Mg(2+) site is built by Asp461, Asp467, Glu470, and Glu471. Positions 708–800 (PKFPGVTRDI…ALQAQGATIR (93 aa)) constitute an FDX-ACB domain.

The protein belongs to the phenylalanyl-tRNA synthetase beta subunit family. Type 1 subfamily. In terms of assembly, tetramer of two alpha and two beta subunits. Mg(2+) is required as a cofactor.

The protein localises to the cytoplasm. The enzyme catalyses tRNA(Phe) + L-phenylalanine + ATP = L-phenylalanyl-tRNA(Phe) + AMP + diphosphate + H(+). The sequence is that of Phenylalanine--tRNA ligase beta subunit from Staphylococcus haemolyticus (strain JCSC1435).